A 119-amino-acid chain; its full sequence is Beta-2-microglobulin (119 aa).

Residues 1–20 form the signal peptide; the sequence is MACFVVVALLVLLSLSGLEA. The Ig-like C1-type domain occupies 25–114; it reads PKIQVYSRHP…VTFSTPKTVK (90 aa). Cys45 and Cys100 are joined by a disulfide.

The protein belongs to the beta-2-microglobulin family. In terms of assembly, heterodimer of an alpha chain and a beta chain. Beta-2-microglobulin is the beta-chain of major histocompatibility complex class I molecules.

The protein localises to the secreted. Component of the class I major histocompatibility complex (MHC). Involved in the presentation of peptide antigens to the immune system. This Leontopithecus chrysopygus (Golden-rumped lion tamarin) protein is Beta-2-microglobulin (B2M).